A 107-amino-acid chain; its full sequence is SH3 domain-binding glutamic acid-rich-like protein 2 (107 aa).

An SH3-binding motif is present at residues Q61 to P67.

The protein belongs to the SH3BGR family.

It is found in the nucleus. This is SH3 domain-binding glutamic acid-rich-like protein 2 (SH3BGRL2) from Pongo abelii (Sumatran orangutan).